Reading from the N-terminus, the 398-residue chain is 1-deoxy-D-xylulose 5-phosphate reductoisomerase (398 aa).

T10, G11, S12, I13, K37, N38, and N124 together coordinate NADPH. K125 lines the 1-deoxy-D-xylulose 5-phosphate pocket. E126 contacts NADPH. D150 is a Mn(2+) binding site. S151, E152, S186, and H209 together coordinate 1-deoxy-D-xylulose 5-phosphate. E152 serves as a coordination point for Mn(2+). G215 contributes to the NADPH binding site. 1-deoxy-D-xylulose 5-phosphate is bound by residues S222, N227, K228, and E231. Mn(2+) is bound at residue E231.

It belongs to the DXR family. In terms of assembly, homodimer. The cofactor is Mg(2+). Mn(2+) is required as a cofactor.

It carries out the reaction 2-C-methyl-D-erythritol 4-phosphate + NADP(+) = 1-deoxy-D-xylulose 5-phosphate + NADPH + H(+). The protein operates within isoprenoid biosynthesis; isopentenyl diphosphate biosynthesis via DXP pathway; isopentenyl diphosphate from 1-deoxy-D-xylulose 5-phosphate: step 1/6. Its function is as follows. Catalyzes the NADPH-dependent rearrangement and reduction of 1-deoxy-D-xylulose-5-phosphate (DXP) to 2-C-methyl-D-erythritol 4-phosphate (MEP). This chain is 1-deoxy-D-xylulose 5-phosphate reductoisomerase, found in Buchnera aphidicola subsp. Acyrthosiphon pisum (strain 5A).